The sequence spans 445 residues: MAERNEQILTPSQLNALARDLLEGSFPLVWVEAELSSVTRPSSGHLYFTLKDARAQIRCAMFKPKSTWLKFQPREGLRVLARGRLTLYEARGDYQLVLDHMEEAGEGALRRAFDALRARLAAEGLFDAERKQSLPAHVQRLAVITSPSGAAVRDVLSVLARRFPLLEVDLLPSLVQGDSAAAQITSLLQRADASGRYDVILITRGGGSLEDLWAFNDERLARAIAAAQTPVVSAVGHETDFSLSDFVADVRAPTPSVAAELLVPDQRELVPRVRRAQARMTQLQQHALGNAMQRADRLALRLRAHSPQARLQLLHRRQEEAGRQLGARMTQVLERLQARVQRGHAQVQSHNPQRHLAGLQQRLRALHPQAAMQRRLQHDQLQLRSIARSLEAVNPLATVARGYAIVTRPADGSVVRSAAEVAAGERLRAQLADGSIEVRVEPGER.

It belongs to the XseA family. As to quaternary structure, heterooligomer composed of large and small subunits.

The protein resides in the cytoplasm. It catalyses the reaction Exonucleolytic cleavage in either 5'- to 3'- or 3'- to 5'-direction to yield nucleoside 5'-phosphates.. In terms of biological role, bidirectionally degrades single-stranded DNA into large acid-insoluble oligonucleotides, which are then degraded further into small acid-soluble oligonucleotides. The protein is Exodeoxyribonuclease 7 large subunit of Xanthomonas oryzae pv. oryzae (strain MAFF 311018).